Consider the following 213-residue polypeptide: LIM domain-containing protein PLIM2c (213 aa).

2 LIM zinc-binding domains span residues 9–69 (DKCK…LFKE) and 105–165 (DKCA…LFLE). The interval 177 to 213 (ANHRRSTAEEDKTEPKEDEANPTEEETSDAAAEEHES) is disordered. Positions 182-195 (STAEEDKTEPKEDE) are enriched in basic and acidic residues.

As to quaternary structure, interacts with F-actin. Exclusively expressed in pollen grains.

The protein localises to the cytoplasm. It is found in the cytoskeleton. In terms of biological role, binds to actin filaments and promotes cross-linking into thick bundles. Has an actin-stabilizing activity. Associates predominantly with long and dynamic actin bundles in the shank of growing pollen tubes. The actin regulatory activities are inhibited by pH &gt; 6.8 and/or high [Ca(2+)]. The chain is LIM domain-containing protein PLIM2c from Arabidopsis thaliana (Mouse-ear cress).